The primary structure comprises 215 residues: 3-demethoxyubiquinol 3-hydroxylase (215 aa).

The Fe cation site is built by Glu-64, Glu-94, His-97, Glu-146, Glu-178, and His-181.

The protein belongs to the COQ7 family. Requires Fe cation as cofactor.

It localises to the cell membrane. It catalyses the reaction a 5-methoxy-2-methyl-3-(all-trans-polyprenyl)benzene-1,4-diol + AH2 + O2 = a 3-demethylubiquinol + A + H2O. It functions in the pathway cofactor biosynthesis; ubiquinone biosynthesis. Catalyzes the hydroxylation of 2-nonaprenyl-3-methyl-6-methoxy-1,4-benzoquinol during ubiquinone biosynthesis. The sequence is that of 3-demethoxyubiquinol 3-hydroxylase from Pseudomonas savastanoi pv. phaseolicola (strain 1448A / Race 6) (Pseudomonas syringae pv. phaseolicola (strain 1448A / Race 6)).